A 244-amino-acid chain; its full sequence is RAD51-like protein 1 (244 aa).

In terms of assembly, interacts with brc-2 and rad-51.

The protein resides in the nucleus. Functionally, has a role in the homologous recombination repair (HRR) of genomic DNA during meiosis. Required for rad-51 recruitment onto ssDNA gaps generated at stalled replication fork barriers. This Caenorhabditis briggsae protein is RAD51-like protein 1.